A 230-amino-acid chain; its full sequence is MNSAIIVFPGTNRERDMAKALTLVGGKAPQMVWHRDSALPAGLDLVVLPGGFSYGDYLRSGAMGARSPILDAVRRFAEAGGHVLGVCNGFQILTEAGLLPGALMRNRDLRFICRDVHLRVETIASPYTSAYGLGEVARVPVAHHDGNYFADDATLAQLADEDRVAFRYCAADGTVGEASTPNGSRDAIAGILSANRRVLGMMPHPENLVEPALGGIGGRALFQSIVESLS.

The Glutamine amidotransferase type-1 domain occupies 3–230 (SAIIVFPGTN…LFQSIVESLS (228 aa)). Cysteine 87 functions as the Nucleophile in the catalytic mechanism. Active-site residues include histidine 204 and glutamate 206.

As to quaternary structure, part of the FGAM synthase complex composed of 1 PurL, 1 PurQ and 2 PurS subunits.

It localises to the cytoplasm. It catalyses the reaction N(2)-formyl-N(1)-(5-phospho-beta-D-ribosyl)glycinamide + L-glutamine + ATP + H2O = 2-formamido-N(1)-(5-O-phospho-beta-D-ribosyl)acetamidine + L-glutamate + ADP + phosphate + H(+). It carries out the reaction L-glutamine + H2O = L-glutamate + NH4(+). The protein operates within purine metabolism; IMP biosynthesis via de novo pathway; 5-amino-1-(5-phospho-D-ribosyl)imidazole from N(2)-formyl-N(1)-(5-phospho-D-ribosyl)glycinamide: step 1/2. Part of the phosphoribosylformylglycinamidine synthase complex involved in the purines biosynthetic pathway. Catalyzes the ATP-dependent conversion of formylglycinamide ribonucleotide (FGAR) and glutamine to yield formylglycinamidine ribonucleotide (FGAM) and glutamate. The FGAM synthase complex is composed of three subunits. PurQ produces an ammonia molecule by converting glutamine to glutamate. PurL transfers the ammonia molecule to FGAR to form FGAM in an ATP-dependent manner. PurS interacts with PurQ and PurL and is thought to assist in the transfer of the ammonia molecule from PurQ to PurL. This is Phosphoribosylformylglycinamidine synthase subunit PurQ from Rhodospirillum rubrum (strain ATCC 11170 / ATH 1.1.1 / DSM 467 / LMG 4362 / NCIMB 8255 / S1).